A 172-amino-acid chain; its full sequence is Large ribosomal subunit protein uL10 (172 aa).

This sequence belongs to the universal ribosomal protein uL10 family. As to quaternary structure, part of the ribosomal stalk of the 50S ribosomal subunit. The N-terminus interacts with L11 and the large rRNA to form the base of the stalk. The C-terminus forms an elongated spine to which L12 dimers bind in a sequential fashion forming a multimeric L10(L12)X complex.

Forms part of the ribosomal stalk, playing a central role in the interaction of the ribosome with GTP-bound translation factors. The protein is Large ribosomal subunit protein uL10 of Rhodospirillum rubrum (strain ATCC 11170 / ATH 1.1.1 / DSM 467 / LMG 4362 / NCIMB 8255 / S1).